The chain runs to 747 residues: Elongation factor G, mitochondrial (747 aa).

The N-terminal 16 residues, 1–16, are a transit peptide targeting the mitochondrion; it reads MSLIMRVLNGNLSLRL. Positions 42 to 319 constitute a tr-type G domain; it reads ERIRNIGISA…AIIDYLPNPG (278 aa). Residues 51–58, 118–122, and 172–175 contribute to the GTP site; these read AHIDSGKT, DTPGH, and NKLD.

It belongs to the TRAFAC class translation factor GTPase superfamily. Classic translation factor GTPase family. EF-G/EF-2 subfamily.

The protein localises to the mitochondrion. It functions in the pathway protein biosynthesis; polypeptide chain elongation. Functionally, mitochondrial GTPase that catalyzes the GTP-dependent ribosomal translocation step during translation elongation. During this step, the ribosome changes from the pre-translocational (PRE) to the post-translocational (POST) state as the newly formed A-site-bound peptidyl-tRNA and P-site-bound deacylated tRNA move to the P and E sites, respectively. Catalyzes the coordinated movement of the two tRNA molecules, the mRNA and conformational changes in the ribosome. Essential during development as it acts as a retrograde signal from mitochondria to the nucleus to slow down cell proliferation if mitochondrial energy output is low. The sequence is that of Elongation factor G, mitochondrial from Drosophila grimshawi (Hawaiian fruit fly).